The primary structure comprises 487 residues: Melanopsin (487 aa).

Positions 1–37 (MNPPSGPRTQEPSCVATPASPSRWDGYRSSTSSLDQP) are disordered. Over 1 to 67 (MNPPSGPRTQ…VDVPDHAHYT (67 aa)) the chain is Extracellular. The helical transmembrane segment at 68–88 (LGTVILLVGLTGILGNLMVIY) threads the bilayer. Residues 89–102 (TFCRSRGLRTPANM) are Cytoplasmic-facing. The helical transmembrane segment at 103–123 (FIINLAVSDFFMSFTQAPVFF) threads the bilayer. The Extracellular segment spans residues 124–139 (ASSLHKRWLFGEAGCE). Residues cysteine 138 and cysteine 216 are joined by a disulfide bond. A helical membrane pass occupies residues 140 to 160 (FYAFCGALFGITSMITLMAIA). The Cytoplasmic segment spans residues 161–183 (LDRYLVITHPLATIGVVSKRRAA). A helical membrane pass occupies residues 184-204 (LVLLGVWLYALAWSLPPFFGW). Residues 205-233 (SAYVPEGLLTSCSWDYMSFTPSVRAYTML) lie on the Extracellular side of the membrane. The helical transmembrane segment at 234-254 (LFCFVFFLPLLVIVYCYIFIF) threads the bilayer. The Cytoplasmic segment spans residues 255–291 (RAIRETGQALQTFRACEGGGRSPRQRQRLQREWKMAK). Residues 292-312 (IELLVILLFVLSWAPYSIVAL) traverse the membrane as a helical segment. At 313–327 (MAFAGYAHVLTPYMN) the chain is on the extracellular side. Residues 328–348 (SVPAVIAKASAIHNPIIYAIT) form a helical membrane-spanning segment. At lysine 335 the chain carries N6-(retinylidene)lysine. At 349–487 (HPKYRMAIAQ…LPLHPGWAFH (139 aa)) the chain is on the cytoplasmic side. The disordered stretch occupies residues 436 to 459 (CSQGLEDREAKAPVRPQGREAETP). A compositionally biased stretch (basic and acidic residues) spans 440–457 (LEDREAKAPVRPQGREAE).

Belongs to the G-protein coupled receptor 1 family. Opsin subfamily. In terms of tissue distribution, eye. Expression is restricted within the ganglion cell layer.

Its subcellular location is the cell membrane. The protein localises to the cell projection. It localises to the axon. It is found in the dendrite. The protein resides in the perikaryon. Photoreceptor that binds cis-retinaldehydes. Contributes to pupillar reflex, photoentrainment and other non-image forming responses to light. May be involved in the optokinetic visual tracking response. May be involved in the regulation of retinal hyaloid vessel growth and regression. The chain is Melanopsin (OPN4) from Felis catus (Cat).